We begin with the raw amino-acid sequence, 154 residues long: Transcriptional repressor NrdR (154 aa).

A zinc finger lies at 3-34 (CPFCGANDTKVIDSRLVAEGEQVRRRRECVAC). The region spanning 49–139 (PRLIKQDGTR…VYRRFQDLDE (91 aa)) is the ATP-cone domain.

The protein belongs to the NrdR family. The cofactor is Zn(2+).

Its function is as follows. Negatively regulates transcription of bacterial ribonucleotide reductase nrd genes and operons by binding to NrdR-boxes. This Pseudomonas putida (strain W619) protein is Transcriptional repressor NrdR.